We begin with the raw amino-acid sequence, 129 residues long: Small ribosomal subunit protein uS11 (129 aa).

The protein belongs to the universal ribosomal protein uS11 family. As to quaternary structure, part of the 30S ribosomal subunit. Interacts with proteins S7 and S18. Binds to IF-3.

In terms of biological role, located on the platform of the 30S subunit, it bridges several disparate RNA helices of the 16S rRNA. Forms part of the Shine-Dalgarno cleft in the 70S ribosome. The sequence is that of Small ribosomal subunit protein uS11 from Enterococcus faecalis (strain ATCC 700802 / V583).